A 180-amino-acid polypeptide reads, in one-letter code: Acireductone dioxygenase (180 aa).

Positions 96, 98, 102, and 140 each coordinate Fe(2+). Ni(2+) is bound by residues His96, His98, Glu102, and His140.

The protein belongs to the acireductone dioxygenase (ARD) family. Monomer. The cofactor is Fe(2+). It depends on Ni(2+) as a cofactor.

It catalyses the reaction 1,2-dihydroxy-5-(methylsulfanyl)pent-1-en-3-one + O2 = 3-(methylsulfanyl)propanoate + CO + formate + 2 H(+). The enzyme catalyses 1,2-dihydroxy-5-(methylsulfanyl)pent-1-en-3-one + O2 = 4-methylsulfanyl-2-oxobutanoate + formate + 2 H(+). It participates in amino-acid biosynthesis; L-methionine biosynthesis via salvage pathway; L-methionine from S-methyl-5-thio-alpha-D-ribose 1-phosphate: step 5/6. In terms of biological role, catalyzes 2 different reactions between oxygen and the acireductone 1,2-dihydroxy-3-keto-5-methylthiopentene (DHK-MTPene) depending upon the metal bound in the active site. Fe-containing acireductone dioxygenase (Fe-ARD) produces formate and 2-keto-4-methylthiobutyrate (KMTB), the alpha-ketoacid precursor of methionine in the methionine recycle pathway. Ni-containing acireductone dioxygenase (Ni-ARD) produces methylthiopropionate, carbon monoxide and formate, and does not lie on the methionine recycle pathway. The chain is Acireductone dioxygenase from Synechococcus sp. (strain WH7803).